A 1038-amino-acid polypeptide reads, in one-letter code: uncharacterized protein (1038 aa).

The segment covering 1–14 (MEENTAQKQSNATG) has biased composition (polar residues). The interval 1–100 (MEENTAQKQS…QSENENYDFS (100 aa)) is disordered. Over residues 58 to 71 (NPERELNSDGTDRI) the composition is skewed to basic and acidic residues. Acidic residues predominate over residues 72-83 (IEEEEEEDDIEN). A phosphoserine mark is found at Ser-112, Ser-113, and Ser-114. Disordered regions lie at residues 144–201 (GKDP…VKRR), 360–381 (ELDN…TEQA), 422–441 (SHSN…DEKL), 454–526 (QTTK…SGEL), and 556–575 (TNSE…QPGT). Over residues 156–179 (SSMASSSTRSSQSSQVSAIQPQSQ) the composition is skewed to low complexity. Basic and acidic residues predominate over residues 180–198 (DDNRVSDIRQMENRRELNV). 2 stretches are compositionally biased toward basic and acidic residues: residues 426–441 (HSNE…DEKL) and 489–505 (DAEK…EHHP). Residue Ser-436 is modified to Phosphoserine. Positions 506–522 (SITSVNSPFLYSPSKQP) are enriched in polar residues. 2 positions are modified to phosphoserine: Ser-618 and Ser-856. 3 disordered regions span residues 803–864 (RGSL…ASAD), 940–974 (GEAP…SPAR), and 1005–1024 (KAKS…KESK). Residues 826–859 (TLSLKTSTTGLSSHSKSAENNSTQQSTTSPSINS) show a composition bias toward low complexity. The span at 955–974 (VSTTTKLAKRITQPSLSPAR) shows a compositional bias: polar residues. A compositionally biased stretch (low complexity) spans 1009–1020 (EQSNAKSSSSSI).

It localises to the cytoplasm. This is an uncharacterized protein from Schizosaccharomyces pombe (strain 972 / ATCC 24843) (Fission yeast).